The following is a 309-amino-acid chain: Methionyl-tRNA formyltransferase (309 aa).

(6S)-5,6,7,8-tetrahydrofolate is bound at residue serine 109–proline 112.

Belongs to the Fmt family.

The enzyme catalyses L-methionyl-tRNA(fMet) + (6R)-10-formyltetrahydrofolate = N-formyl-L-methionyl-tRNA(fMet) + (6S)-5,6,7,8-tetrahydrofolate + H(+). Its function is as follows. Attaches a formyl group to the free amino group of methionyl-tRNA(fMet). The formyl group appears to play a dual role in the initiator identity of N-formylmethionyl-tRNA by promoting its recognition by IF2 and preventing the misappropriation of this tRNA by the elongation apparatus. In Clostridium perfringens (strain 13 / Type A), this protein is Methionyl-tRNA formyltransferase.